We begin with the raw amino-acid sequence, 205 residues long: Gap junction epsilon-1 protein (205 aa).

Residues 1–23 (MSLNYIKNFYEGCVKPPTVIGQF) are Cytoplasmic-facing. The helical transmembrane segment at 24-44 (HTLFFGSIRIFFLGVLGFAVY) threads the bilayer. The Extracellular portion of the chain corresponds to 45 to 76 (GNEALHFICDPDKREVNLFCYNQFRPITPQVS). 2 disulfide bridges follow: Cys53/Cys161 and Cys64/Cys148. Residues 77-97 (FSALQLVIVLVPGALFHLYAA) traverse the membrane as a helical segment. At 98–112 (CKSINQECILQKPIY) the chain is on the cytoplasmic side. A helical membrane pass occupies residues 113-133 (TIIYILSVLLRISLAAIAFWL). The Extracellular segment spans residues 134–170 (QIYLFGFQVKSLYLCDARSLGENMIIRCMVPEHFEKT). The chain crosses the membrane as a helical span at residues 171 to 191 (IFLIAINTFTTITILLFVAEI). At 192–205 (FEIIFRRLYFPFRQ) the chain is on the cytoplasmic side.

This sequence belongs to the connexin family. Beta-type (group I) subfamily. As to quaternary structure, a connexon is composed of a hexamer of connexins. As to expression, not detected in lens or retina.

It is found in the cell membrane. Functionally, mediates calcium-independent ATP release, suggesting activity as a hemichannel. Does not form functional gap junctions. In Homo sapiens (Human), this protein is Gap junction epsilon-1 protein (GJE1).